A 98-amino-acid polypeptide reads, in one-letter code: Small ribosomal subunit protein bS20 (98 aa).

This sequence belongs to the bacterial ribosomal protein bS20 family.

In terms of biological role, binds directly to 16S ribosomal RNA. In Synechococcus sp. (strain CC9902), this protein is Small ribosomal subunit protein bS20.